The sequence spans 485 residues: Adenosylhomocysteinase 2 (485 aa).

Positions 64, 139, and 205 each coordinate substrate. 206–208 (TTT) provides a ligand contact to NAD(+). Substrate contacts are provided by Lys235 and Asp239. NAD(+) contacts are provided by residues Asn240, 269-274 (GYGDVG), Glu292, Asn327, 348-350 (IGH), and Asn397.

The protein belongs to the adenosylhomocysteinase family. The cofactor is NAD(+).

The enzyme catalyses S-adenosyl-L-homocysteine + H2O = L-homocysteine + adenosine. The protein operates within amino-acid biosynthesis; L-homocysteine biosynthesis; L-homocysteine from S-adenosyl-L-homocysteine: step 1/1. Adenosylhomocysteine is a competitive inhibitor of S-adenosyl-L-methionine-dependent methyl transferase reactions; therefore adenosylhomocysteinase may play a key role in the control of methylations via regulation of the intracellular concentration of adenosylhomocysteine. The chain is Adenosylhomocysteinase 2 (SAHH2) from Arabidopsis thaliana (Mouse-ear cress).